Reading from the N-terminus, the 423-residue chain is Serine hydroxymethyltransferase (423 aa).

Residues L120 and 124-126 (GHL) contribute to the (6S)-5,6,7,8-tetrahydrofolate site. K229 carries the N6-(pyridoxal phosphate)lysine modification. 353–355 (SPF) serves as a coordination point for (6S)-5,6,7,8-tetrahydrofolate.

This sequence belongs to the SHMT family. Homodimer. Pyridoxal 5'-phosphate serves as cofactor.

Its subcellular location is the cytoplasm. The enzyme catalyses (6R)-5,10-methylene-5,6,7,8-tetrahydrofolate + glycine + H2O = (6S)-5,6,7,8-tetrahydrofolate + L-serine. The protein operates within one-carbon metabolism; tetrahydrofolate interconversion. It functions in the pathway amino-acid biosynthesis; glycine biosynthesis; glycine from L-serine: step 1/1. Its function is as follows. Catalyzes the reversible interconversion of serine and glycine with tetrahydrofolate (THF) serving as the one-carbon carrier. This reaction serves as the major source of one-carbon groups required for the biosynthesis of purines, thymidylate, methionine, and other important biomolecules. Also exhibits THF-independent aldolase activity toward beta-hydroxyamino acids, producing glycine and aldehydes, via a retro-aldol mechanism. The sequence is that of Serine hydroxymethyltransferase from Prochlorococcus marinus (strain MIT 9301).